The primary structure comprises 400 residues: Nicotinate phosphoribosyltransferase (400 aa).

Histidine 220 carries the phosphohistidine; by autocatalysis modification.

This sequence belongs to the NAPRTase family. Transiently phosphorylated on a His residue during the reaction cycle. Phosphorylation strongly increases the affinity for substrates and increases the rate of nicotinate D-ribonucleotide production. Dephosphorylation regenerates the low-affinity form of the enzyme, leading to product release.

It catalyses the reaction nicotinate + 5-phospho-alpha-D-ribose 1-diphosphate + ATP + H2O = nicotinate beta-D-ribonucleotide + ADP + phosphate + diphosphate. It participates in cofactor biosynthesis; NAD(+) biosynthesis; nicotinate D-ribonucleotide from nicotinate: step 1/1. Functionally, catalyzes the synthesis of beta-nicotinate D-ribonucleotide from nicotinate and 5-phospho-D-ribose 1-phosphate at the expense of ATP. This Salmonella schwarzengrund (strain CVM19633) protein is Nicotinate phosphoribosyltransferase.